The sequence spans 265 residues: MSGEVDYGFGDLMDDPEDYCPPTPPPTSQVFTMQSGKPITLHLVGASPTEAHHLWNGAKMIADFFEEDLSRVKGKTVLELGAAAGLPSLVAAILGAHKVVVTDYPDPDIIRIMQKNVDECDETVEPRGRIVDTVDAMGFVWGADSVPLLARLNPTDDSHKERFDILILADLLFRHSEHGNMVKTIKETLKISRESVAYVFFTSYRPWKKELDMGFFDIAREQGFEVEQIAERRLDKPLFENDPGDLDVQKTVKGFAVRWSAEACN.

Residues W55, 81–83 (GAA), D103, W141, and A169 each bind S-adenosyl-L-methionine.

Belongs to the class I-like SAM-binding methyltransferase superfamily. EFM7 family.

The protein localises to the cytoplasm. S-adenosyl-L-methionine-dependent protein methyltransferase that trimethylates the N-terminal glycine 'Gly-2' of elongation factor 1-alpha, before also catalyzing the mono- and dimethylation of 'Lys-3'. The protein is Protein N-terminal and lysine N-methyltransferase EFM7 of Gibberella zeae (strain ATCC MYA-4620 / CBS 123657 / FGSC 9075 / NRRL 31084 / PH-1) (Wheat head blight fungus).